Here is a 128-residue protein sequence, read N- to C-terminus: Large ribosomal subunit protein uL22 (128 aa).

This sequence belongs to the universal ribosomal protein uL22 family. As to quaternary structure, part of the 50S ribosomal subunit.

Its function is as follows. This protein binds specifically to 23S rRNA; its binding is stimulated by other ribosomal proteins, e.g. L4, L17, and L20. It is important during the early stages of 50S assembly. It makes multiple contacts with different domains of the 23S rRNA in the assembled 50S subunit and ribosome. The globular domain of the protein is located near the polypeptide exit tunnel on the outside of the subunit, while an extended beta-hairpin is found that lines the wall of the exit tunnel in the center of the 70S ribosome. This is Large ribosomal subunit protein uL22 from Prochlorococcus marinus (strain MIT 9312).